Here is a 122-residue protein sequence, read N- to C-terminus: Protein C10 (122 aa).

It belongs to the UPF0456 family.

It localises to the cytoplasm. The protein is Protein C10 of Danio rerio (Zebrafish).